Consider the following 74-residue polypeptide: Putative ribosome-binding protein YbzG (74 aa).

This chain is Putative ribosome-binding protein YbzG (ybzG), found in Bacillus subtilis (strain 168).